Here is an 843-residue protein sequence, read N- to C-terminus: MALPRCMWPNYVWRAMMACVVHRGSGAPLTLCLLGCLLQTFHVLSQKLDDVDPLVTTNFGKIRGIKKELNNEILGPVIQFLGVPYAAPPTGEHRFQPPEPPSPWSDIRNATQFAPVCPQNIIDGRLPEVMLPVWFTNNLDVVSSYVQDQSEDCLYLNIYVPTEDVKRISKECARKPGKKICRKGDIRDSGGPKPVMVYIHGGSYMEGTGNLYDGSVLASYGNVIVITVNYRLGVLGFLSTGDQAAKGNYGLLDLIQALRWTSENIGFFGGDPLRITVFGSGAGGSCVNLLTLSHYSEGNRWSNSTKGLFQRAIAQSGTALSSWAVSFQPAKYARILATKVGCNVSDTVELVECLQKKPYKELVDQDVQPARYHIAFGPVIDGDVIPDDPQILMEQGEFLNYDIMLGVNQGEGLKFVENIVDSDDGVSASDFDFAVSNFVDNLYGYPEGKDVLRETIKFMYTDWADRHNPETRRKTLLALFTDHQWVAPAVATADLHSNFGSPTYFYAFYHHCQTDQVPAWADAAHGDEVPYVLGIPMIGPTELFPCNFSKNDVMLSAVVMTYWTNFAKTGDPNQPVPQDTKFIHTKPNRFEEVAWTRYSQKDQLYLHIGLKPRVKEHYRANKVNLWLELVPHLHNLNDISQYTSTTTKVPSTDITLRPTRKNSTPVTSAFPTAKQDDPKQQPSPFSVDQRDYSTELSVTIAVGASLLFLNILAFAALYYKKDKRRHDVHRRCSPQRTTTNDLTHAPEEEIMSLQMKHTDLDHECESIHPHEVVLRTACPPDYTLAMRRSPDDVPLMTPNTITMIPNTIPGIQPLHTFNTFTGGQNNTLPHPHPHPHSHSTTRV.

The first 45 residues, 1-45 (MALPRCMWPNYVWRAMMACVVHRGSGAPLTLCLLGCLLQTFHVLS), serve as a signal peptide directing secretion. Over 46 to 697 (QKLDDVDPLV…DQRDYSTELS (652 aa)) the chain is Extracellular. N-linked (GlcNAc...) (complex) asparagine glycosylation is present at Asn-109. Intrachain disulfides connect Cys-117–Cys-153 and Cys-172–Cys-181. 2 N-linked (GlcNAc...) (complex) asparagine glycosylation sites follow: Asn-303 and Asn-343. Cystine bridges form between Cys-342-Cys-353 and Cys-512-Cys-546. Asn-547 carries N-linked (GlcNAc...) asparagine glycosylation. A disordered region spans residues 647–688 (TKVPSTDITLRPTRKNSTPVTSAFPTAKQDDPKQQPSPFSVD). Polar residues predominate over residues 661–670 (KNSTPVTSAF). 2 O-linked (GalNAc...) serine glycosylation sites follow: Ser-683 and Ser-686. The helical transmembrane segment at 698 to 718 (VTIAVGASLLFLNILAFAALY) threads the bilayer. The Cytoplasmic segment spans residues 719–843 (YKKDKRRHDV…HPHSHSTTRV (125 aa)). A disordered region spans residues 822–843 (GGQNNTLPHPHPHPHSHSTTRV). Positions 831–843 (PHPHPHSHSTTRV) are enriched in basic residues.

Belongs to the type-B carboxylesterase/lipase family. Interacts with neurexins NRXN1, NRXN2 and NRXN3. Interaction with neurexins is mediated by heparan sulfate glycan modification on neurexin. Interacts with NLGN3. Interacts (via its C-terminus) with DLG4/PSD-95 (via PDZ domain 3). Interacts with GOPC. Interacts with AIP1 and PDZRN3. Post-translationally, the N-terminus is blocked. Expressed in brain, almost exclusively in neurons, and spinal cord. Detected in pancreas islet beta cells.

It localises to the cell membrane. Its subcellular location is the postsynaptic density. It is found in the synaptic cleft. The protein resides in the synaptic cell membrane. Functionally, cell surface protein involved in cell-cell-interactions via its interactions with neurexin family members. Plays a role in synapse function and synaptic signal transmission, and probably mediates its effects by recruiting and clustering other synaptic proteins. May promote the initial formation of synapses, but is not essential for this. In vitro, triggers the de novo formation of presynaptic structures. May be involved in specification of excitatory synapses. Required to maintain wakefulness quality and normal synchrony of cerebral cortex activity during wakefulness and sleep. The protein is involved in nervous system development. In Rattus norvegicus (Rat), this protein is Neuroligin-1 (Nlgn1).